The following is a 598-amino-acid chain: uncharacterized protein (598 aa).

Positions 397, 408, 506, and 520 each coordinate Mn(2+).

The protein belongs to the peptidase M24B family. Mn(2+) serves as cofactor.

This is an uncharacterized protein from Schizosaccharomyces pombe (strain 972 / ATCC 24843) (Fission yeast).